A 103-amino-acid polypeptide reads, in one-letter code: Large ribosomal subunit protein uL23 (103 aa).

This sequence belongs to the universal ribosomal protein uL23 family. As to quaternary structure, part of the 50S ribosomal subunit. Contacts protein L29, and trigger factor when it is bound to the ribosome.

Functionally, one of the early assembly proteins it binds 23S rRNA. One of the proteins that surrounds the polypeptide exit tunnel on the outside of the ribosome. Forms the main docking site for trigger factor binding to the ribosome. The chain is Large ribosomal subunit protein uL23 from Chlorobium chlorochromatii (strain CaD3).